A 175-amino-acid polypeptide reads, in one-letter code: Large ribosomal subunit protein uL10 (175 aa).

This sequence belongs to the universal ribosomal protein uL10 family. In terms of assembly, part of the ribosomal stalk of the 50S ribosomal subunit. The N-terminus interacts with L11 and the large rRNA to form the base of the stalk. The C-terminus forms an elongated spine to which L12 dimers bind in a sequential fashion forming a multimeric L10(L12)X complex.

In terms of biological role, forms part of the ribosomal stalk, playing a central role in the interaction of the ribosome with GTP-bound translation factors. This Prochlorococcus marinus (strain MIT 9211) protein is Large ribosomal subunit protein uL10.